Consider the following 172-residue polypeptide: UPF0254 protein Mlab_1743 (172 aa).

This sequence belongs to the UPF0254 family.

The chain is UPF0254 protein Mlab_1743 from Methanocorpusculum labreanum (strain ATCC 43576 / DSM 4855 / Z).